We begin with the raw amino-acid sequence, 309 residues long: Serine/threonine-protein phosphatase 2A catalytic subunit beta isoform (309 aa).

4 residues coordinate Mn(2+): Asp-57, His-59, Asp-85, and Asn-117. His-118 (proton donor) is an active-site residue. Mn(2+) contacts are provided by His-167 and His-241. Residue Tyr-307 is modified to Phosphotyrosine. A Leucine methyl ester modification is found at Leu-309.

It belongs to the PPP phosphatase family. PP-1 subfamily. In terms of assembly, PP2A consists of a common heterodimeric core enzyme (composed of a 36 kDa catalytic subunit (subunit C) and a 65 kDa constant regulatory subunit (PR65) (subunit A)) that associates with a variety of regulatory subunits. Proteins that associate with the core dimer include three families of regulatory subunits B (the R2/B/PR55/B55, R3/B''/PR72/PR130/PR59 and R5/B'/B56 families), the 48 kDa variable regulatory subunit, viral proteins, and cell signaling molecules. Binds PPME1. May indirectly interact with SGO1, most probably through regulatory B56 subunits. Interacts with CTTNBP2NL. Interacts with PTPA. Found in a complex with at least ARL2, PPP2CB, PPP2R1A, PPP2R2A, PPP2R5E and TBCD. Interacts with TBCD. Part of the core of STRIPAK complexes composed of PP2A catalytic and scaffolding subunits, the striatins (PP2A regulatory subunits), the striatin-associated proteins MOB4, STRIP1 and STRIP2, PDCD10 and members of the STE20 kinases, such as STK24 and STK26. Mn(2+) serves as cofactor. In terms of processing, reversibly methyl esterified on Leu-309 by leucine carboxyl methyltransferase 1 (Lcmt1) and protein phosphatase methylesterase 1 (Ppme1). Carboxyl methylation influences the affinity of the catalytic subunit for the different regulatory subunits, thereby modulating the PP2A holoenzyme's substrate specificity, enzyme activity and cellular localization. Phosphorylation of either threonine (by autophosphorylation-activated protein kinase) or tyrosine results in inactivation of the phosphatase. Auto-dephosphorylation has been suggested as a mechanism for reactivation. Post-translationally, may be monoubiquitinated by NOSIP.

The protein resides in the cytoplasm. It localises to the nucleus. Its subcellular location is the chromosome. The protein localises to the centromere. It is found in the cytoskeleton. The protein resides in the spindle pole. The enzyme catalyses O-phospho-L-seryl-[protein] + H2O = L-seryl-[protein] + phosphate. It catalyses the reaction O-phospho-L-threonyl-[protein] + H2O = L-threonyl-[protein] + phosphate. Catalytic subunit of protein phosphatase 2A (PP2A), a serine/threonine phosphatase involved in the regulation of a wide variety of enzymes, signal transduction pathways, and cellular events. PP2A can modulate the activity of phosphorylase B kinase, casein kinase 2, mitogen-stimulated S6 kinase, and MAP-2 kinase. Part of the striatin-interacting phosphatase and kinase (STRIPAK) complexes. STRIPAK complexes have critical roles in protein (de)phosphorylation and are regulators of multiple signaling pathways including Hippo, MAPK, nuclear receptor and cytoskeleton remodeling. Different types of STRIPAK complexes are involved in a variety of biological processes such as cell growth, differentiation, apoptosis, metabolism and immune regulation. The sequence is that of Serine/threonine-protein phosphatase 2A catalytic subunit beta isoform (Ppp2cb) from Mus musculus (Mouse).